We begin with the raw amino-acid sequence, 883 residues long: MEKLSANEIRQLWIDFFREKNHFFIESKPLVPQNDDSLLWINSGVATLKDYFTGKKIPPSKRLVNSQKALRTNDIENVGLTSRHHTLFEMLGNFSIGDYFKTEAIDYAYEFLTKKLKLDPKNLFITYYDGDDITFEKWKSLGFSNEKLIKGSKKTNFWDLGQGPCGPCSEIYFDRGPKFDSRGSELIKNEIENDRFIEIWNIVFSEFNNDGQQNYAPLKSKNIDTGAGFERIVSILQDGPTNYDTDLFLPIIAEIEKNTVFRYKIENYFLKKPRQTQINKSFRIIADHIRAITLAINDGVQPSNLHRGYIIRRLIRRAYWNGKKLGISHPFLYKLVEIVGKTLDYRFDIPTISKIILNEEENFAKTLEIGYNLLESQLKINKNQIKPVTVFKLFETYGFPVELTKEILAEKNIDFDLSQLVEFQEKHSQISRAKKTTGMQKVINSLTQIKAKISDFIGYHTHHIETKISFLANKDEEVAETNGENLSYVIFEKTPFYATAGGQKHDQGWIIQNNSTIEILDVFKDKFLNNIHVFKGKIVKNQPVFLKLDTKNRLNLERNHSGTHLLFASLRQEFGSEIKQLGSDNNEDRLTFDFPLNRKPSDQEIKSVENRINSYINQKIKRKYLVTNLEEAQKLNAIMTLEESEYMDPNSLRLVIFDKITTDLCGGTHIENTELLEKFTILSCQSKGSGIYRIRAVTSWNKYFEFLKGKIQEILSKISALKNKIKKIEPNFGLNLPNLVDLEQQFDYLKKIEDDLRIYYKKLLKSQLRIAKSELDANKIIEIGKFSFYLDFNLPLHNLKQIAATWREQNPRISFILGANLVNNEFLIIVSSAILASNQILEKILEIFTGSGGGNYKIAQGKIQKKPEKEVFIKLLWENITEF.

Residues His-560, His-564, Cys-665, and His-669 each coordinate Zn(2+).

The protein belongs to the class-II aminoacyl-tRNA synthetase family. The cofactor is Zn(2+).

It is found in the cytoplasm. The catalysed reaction is tRNA(Ala) + L-alanine + ATP = L-alanyl-tRNA(Ala) + AMP + diphosphate. Its function is as follows. Catalyzes the attachment of alanine to tRNA(Ala) in a two-step reaction: alanine is first activated by ATP to form Ala-AMP and then transferred to the acceptor end of tRNA(Ala). Also edits incorrectly charged Ser-tRNA(Ala) and Gly-tRNA(Ala) via its editing domain. The chain is Alanine--tRNA ligase from Mesomycoplasma hyopneumoniae (strain 232) (Mycoplasma hyopneumoniae).